The following is a 223-amino-acid chain: Ribose-5-phosphate isomerase A (223 aa).

Substrate contacts are provided by residues 29–32 (TGST), 82–85 (DGAD), and 95–98 (KGGG). The Proton acceptor role is filled by Glu-104. Lys-122 provides a ligand contact to substrate.

It belongs to the ribose 5-phosphate isomerase family. As to quaternary structure, homodimer.

It carries out the reaction aldehydo-D-ribose 5-phosphate = D-ribulose 5-phosphate. Its pathway is carbohydrate degradation; pentose phosphate pathway; D-ribose 5-phosphate from D-ribulose 5-phosphate (non-oxidative stage): step 1/1. Catalyzes the reversible conversion of ribose-5-phosphate to ribulose 5-phosphate. In Neisseria meningitidis serogroup C (strain 053442), this protein is Ribose-5-phosphate isomerase A.